A 261-amino-acid polypeptide reads, in one-letter code: MRVIIADSPEAVARMGAEQCIRLLQDKPAAVLGLATGSTPIALYAHLIQRRQQGEVSFHQVRTFNLDEYIGIAPQHPQSYRSFMQKQLFDHIDVLPENTHIPNGMGDPIAESRAYEDKIHSAGGIDLQILGLGRNGHIGFNEPTSSLSSRTRAKTLTQETIRDNSRFFSADEEQPHLAITMGIGTILDARKIMLLAAGAAKADAVKAMVEGPISAMHPASALQMHPSALVIVDTDAASKLELIDYYRWVQSETLRVQGAYL.

The active-site Proton acceptor; for enolization step is D67. Catalysis depends on N135, which acts as the For ring-opening step. The active-site Proton acceptor; for ring-opening step is the H137. Catalysis depends on E142, which acts as the For ring-opening step.

It belongs to the glucosamine/galactosamine-6-phosphate isomerase family. NagB subfamily. As to quaternary structure, homohexamer.

It carries out the reaction alpha-D-glucosamine 6-phosphate + H2O = beta-D-fructose 6-phosphate + NH4(+). It functions in the pathway amino-sugar metabolism; N-acetylneuraminate degradation; D-fructose 6-phosphate from N-acetylneuraminate: step 5/5. Its function is as follows. Catalyzes the reversible isomerization-deamination of glucosamine 6-phosphate (GlcN6P) to form fructose 6-phosphate (Fru6P) and ammonium ion. This chain is Glucosamine-6-phosphate deaminase, found in Hahella chejuensis (strain KCTC 2396).